A 131-amino-acid polypeptide reads, in one-letter code: uncharacterized protein (131 aa).

2 consecutive transmembrane segments (helical) span residues 5–25 and 34–54; these read VQPI…YVLV and MAVT…YVMN. The interval 62–131 is disordered; sequence AAFKKAAKQS…KNKKKNRALF (70 aa). Basic residues-rich tracts occupy residues 66-92 and 122-131; these read KAAK…RVSH and KNKKKNRALF.

It localises to the cell membrane. This is an uncharacterized protein from Bacillus subtilis (strain 168).